A 2771-amino-acid chain; its full sequence is Kinesin-like protein KIN-12D (2771 aa).

Composition is skewed to basic and acidic residues over residues Met-1–Asp-13 and Lys-40–Pro-54. Disordered stretches follow at residues Met-1 to Lys-73 and Tyr-117 to Tyr-139. Residues Ser-118–Val-131 show a composition bias toward polar residues. Residues Asn-193–Ile-530 form the Kinesin motor domain. Residue Gly-274 to Thr-281 participates in ATP binding. Microtubules-binding regions lie at residues Ser-400–His-404, Val-431–Glu-437, and His-479–Arg-483. 5 coiled-coil regions span residues Ala-1033 to Glu-1110, Glu-1267 to Lys-1331, Ile-1410 to Asn-1505, Glu-2108 to Lys-2390, and Arg-2512 to Glu-2677. Positions Leu-2727 to Ser-2736 are enriched in basic residues. Positions Leu-2727 to Arg-2771 are disordered. The span at Pro-2744–Gln-2762 shows a compositional bias: low complexity.

This sequence belongs to the TRAFAC class myosin-kinesin ATPase superfamily. Kinesin family. KIN-12 subfamily. Expressed in tissues enriched in dividing cells, such as root meristems, root primordia, and leaf primordia/young leaves.

The protein localises to the cytoplasm. It is found in the cytoskeleton. The protein resides in the phragmoplast. Functionally, involved in the spatial control of cytokinesis by a proper phragmoplast guidance. In Arabidopsis thaliana (Mouse-ear cress), this protein is Kinesin-like protein KIN-12D.